Reading from the N-terminus, the 362-residue chain is Chorismate synthase (362 aa).

An NADP(+)-binding site is contributed by arginine 46. FMN-binding positions include 122–124, 238–239, glycine 278, 293–297, and arginine 319; these read RSS, NA, and KPTPS.

Belongs to the chorismate synthase family. Homotetramer. FMNH2 is required as a cofactor.

It catalyses the reaction 5-O-(1-carboxyvinyl)-3-phosphoshikimate = chorismate + phosphate. The protein operates within metabolic intermediate biosynthesis; chorismate biosynthesis; chorismate from D-erythrose 4-phosphate and phosphoenolpyruvate: step 7/7. Functionally, catalyzes the anti-1,4-elimination of the C-3 phosphate and the C-6 proR hydrogen from 5-enolpyruvylshikimate-3-phosphate (EPSP) to yield chorismate, which is the branch point compound that serves as the starting substrate for the three terminal pathways of aromatic amino acid biosynthesis. This reaction introduces a second double bond into the aromatic ring system. The sequence is that of Chorismate synthase from Campylobacter jejuni subsp. doylei (strain ATCC BAA-1458 / RM4099 / 269.97).